Here is a 677-residue protein sequence, read N- to C-terminus: WD and tetratricopeptide repeats protein 1 (677 aa).

WD repeat units lie at residues 45–84, 88–129, 132–172, 182–222, and 265–305; these read GHSGCVNCLEWNEKGDLLASGSDDQHTIVWDPLHHKKLLS, GHTA…TIHM, DHTN…KHSE, GPMV…NHRK, and RLRV…RPYT. At Ser352 the chain carries Phosphoserine. TPR repeat units follow at residues 361–394 and 396–431; these read LERVKQQANEAFACQQWTQAIQLYSQAVQKAPHN and MLYGNRAAAYMKRKWDGDHYDALRDCLKAISLNPCH. The tract at residues 489 to 509 is disordered; it reads EEKKAAGGGGGPVRLRSTSRK. Residue Ser511 is modified to Phosphoserine. WD repeat units follow at residues 535 to 575 and 578 to 617; these read NTTT…LVRV and GDESIVNCLQPHPSYCFLATSGIDPVVRLWNPRPESEDLT. The disordered stretch occupies residues 655 to 677; it reads SSGGAGASDDEDSAEGQVQCRPS.

It functions in the pathway protein modification; protein ubiquitination. May function as a substrate receptor for CUL4-DDB1 E3 ubiquitin-protein ligase complex. This Mus musculus (Mouse) protein is WD and tetratricopeptide repeats protein 1 (Wdtc1).